Here is a 479-residue protein sequence, read N- to C-terminus: Ribosomal RNA small subunit methyltransferase F (479 aa).

Residues 125-131 (AAAPGSK), Glu-149, Asp-176, and Asp-194 contribute to the S-adenosyl-L-methionine site. Residue Cys-247 is the Nucleophile of the active site.

This sequence belongs to the class I-like SAM-binding methyltransferase superfamily. RsmB/NOP family.

Its subcellular location is the cytoplasm. It carries out the reaction cytidine(1407) in 16S rRNA + S-adenosyl-L-methionine = 5-methylcytidine(1407) in 16S rRNA + S-adenosyl-L-homocysteine + H(+). In terms of biological role, specifically methylates the cytosine at position 1407 (m5C1407) of 16S rRNA. This Salmonella newport (strain SL254) protein is Ribosomal RNA small subunit methyltransferase F.